The sequence spans 198 residues: MDYYSTQISKLIEELGRLPGIGAKSAQRLAFHIINMPKEQVEHLAKTMLDARSNVKYCKVCQTLTDKEICPICSSEKRDQKVIMVVENTRDLAAYEKTGKFDGVYHVLHGAISPMLGIGPQDIKLKELMLRLQGDVDEVIIATNSSLEGEATAMYISKLIKPAGIKVSRIASGVPVGGDLEYIDEVTLLRALDGRIQL.

The C4-type zinc-finger motif lies at 58-73; it reads CKVCQTLTDKEICPIC. The region spanning 81 to 175 is the Toprim domain; sequence KVIMVVENTR…KVSRIASGVP (95 aa).

This sequence belongs to the RecR family.

Its function is as follows. May play a role in DNA repair. It seems to be involved in an RecBC-independent recombinational process of DNA repair. It may act with RecF and RecO. The protein is Recombination protein RecR of Lachnoclostridium phytofermentans (strain ATCC 700394 / DSM 18823 / ISDg) (Clostridium phytofermentans).